The following is a 113-amino-acid chain: Ribonuclease P protein component (113 aa).

Residues 1–10 (MLPTRHRMRT) show a composition bias toward basic residues. Residues 1-23 (MLPTRHRMRTSAHFSTTVRSGAR) are disordered.

Belongs to the RnpA family. As to quaternary structure, consists of a catalytic RNA component (M1 or rnpB) and a protein subunit.

It catalyses the reaction Endonucleolytic cleavage of RNA, removing 5'-extranucleotides from tRNA precursor.. In terms of biological role, RNaseP catalyzes the removal of the 5'-leader sequence from pre-tRNA to produce the mature 5'-terminus. It can also cleave other RNA substrates such as 4.5S RNA. The protein component plays an auxiliary but essential role in vivo by binding to the 5'-leader sequence and broadening the substrate specificity of the ribozyme. The polypeptide is Ribonuclease P protein component (Kocuria rhizophila (strain ATCC 9341 / DSM 348 / NBRC 103217 / DC2201)).